Consider the following 247-residue polypeptide: MIKLVLLRHGESQWNRENRFTGWHDIDLTENGRNEAFQAGRLMKEAGLVFDMAYTSVLKRAIRTLWNAMDSMDLMWISVFKSWRLNERHYGALQGLNKSETSRKYGEEQVLVWRRSYDTPPPLLEKSDARYPGTDPRYGDLSEAEIPLSECLKDTVERFLPIWHETIAPQLRKGKRVIIVAHGNSLRALVKYLDNISEEDIVGLNIPTGIPLVYELDDDLKPLKNYYLGDQEALKKAVDAVAGQSKA.

Substrate contacts are provided by residues Arg-8–Asn-15, Thr-21–Gly-22, Arg-60, Glu-87–Tyr-90, Lys-98, Arg-114–Arg-115, and Gly-183–Asn-184. The Tele-phosphohistidine intermediate role is filled by His-9. Glu-87 serves as the catalytic Proton donor/acceptor.

Belongs to the phosphoglycerate mutase family. BPG-dependent PGAM subfamily.

The catalysed reaction is (2R)-2-phosphoglycerate = (2R)-3-phosphoglycerate. It functions in the pathway carbohydrate degradation; glycolysis; pyruvate from D-glyceraldehyde 3-phosphate: step 3/5. Its function is as follows. Catalyzes the interconversion of 2-phosphoglycerate and 3-phosphoglycerate. In Chlorobium phaeobacteroides (strain DSM 266 / SMG 266 / 2430), this protein is 2,3-bisphosphoglycerate-dependent phosphoglycerate mutase.